The sequence spans 184 residues: Transposon Tn917 resolvase (184 aa).

A Resolvase/invertase-type recombinase catalytic domain is found at 1–134 (MIFGYARVST…SGLKAARVRG (134 aa)). Ser-9 functions as the O-(5'-phospho-DNA)-serine intermediate in the catalytic mechanism. Positions 161–180 (IRQILDASKLSKTTFYRYLN) form a DNA-binding region, H-T-H motif.

This sequence belongs to the site-specific recombinase resolvase family.

Functionally, resolvase catalyzes the resolution (a site-specific recombination) of the cointegrated replicon to yield the final transposition products. The polypeptide is Transposon Tn917 resolvase (tnpR) (Enterococcus faecalis (Streptococcus faecalis)).